Consider the following 367-residue polypeptide: Alanine racemase (367 aa).

Lys40 functions as the Proton acceptor; specific for D-alanine in the catalytic mechanism. Lys40 carries the N6-(pyridoxal phosphate)lysine modification. Substrate is bound at residue Arg136. Tyr263 (proton acceptor; specific for L-alanine) is an active-site residue. Position 310 (Met310) interacts with substrate.

It belongs to the alanine racemase family. Pyridoxal 5'-phosphate is required as a cofactor.

The catalysed reaction is L-alanine = D-alanine. Its pathway is amino-acid biosynthesis; D-alanine biosynthesis; D-alanine from L-alanine: step 1/1. Functionally, catalyzes the interconversion of L-alanine and D-alanine. May also act on other amino acids. This chain is Alanine racemase (alr), found in Streptococcus suis (strain 98HAH33).